The chain runs to 65 residues: Large ribosomal subunit protein bL35 (65 aa).

Belongs to the bacterial ribosomal protein bL35 family.

In Aeromonas salmonicida (strain A449), this protein is Large ribosomal subunit protein bL35.